The primary structure comprises 298 residues: Glutamyl-Q tRNA(Asp) synthetase (298 aa).

Residues Arg-9–Ser-13 and Glu-45 contribute to the L-glutamate site. The 'HIGH' region signature appears at Pro-12–Ser-22. Zn(2+) is bound by residues Cys-101, Cys-103, Tyr-121, and Cys-125. L-glutamate is bound by residues Tyr-179 and Arg-197. Positions Lys-235 to Gln-239 match the 'KMSKS' region motif. Residue Lys-238 coordinates ATP.

Belongs to the class-I aminoacyl-tRNA synthetase family. GluQ subfamily. Zn(2+) serves as cofactor.

Catalyzes the tRNA-independent activation of glutamate in presence of ATP and the subsequent transfer of glutamate onto a tRNA(Asp). Glutamate is transferred on the 2-amino-5-(4,5-dihydroxy-2-cyclopenten-1-yl) moiety of the queuosine in the wobble position of the QUC anticodon. This is Glutamyl-Q tRNA(Asp) synthetase from Chromobacterium violaceum (strain ATCC 12472 / DSM 30191 / JCM 1249 / CCUG 213 / NBRC 12614 / NCIMB 9131 / NCTC 9757 / MK).